Consider the following 523-residue polypeptide: Cytochrome P450 monooxygenase bsc5 (523 aa).

The chain crosses the membrane as a helical span at residues 16-36 (MQLHWTVLGLLPVLFIAILGP). N-linked (GlcNAc...) asparagine glycosylation is found at asparagine 178, asparagine 281, and asparagine 403. Residue cysteine 459 coordinates heme.

Belongs to the cytochrome P450 family. Requires heme as cofactor.

The protein localises to the membrane. The protein operates within mycotoxin biosynthesis. Its function is as follows. Cytochrome P450 monooxygenase; part of the gene cluster that mediates the biosynthesis of the diterpene glucoside brassicicene C. In the first step of the brassicicene C biosynthesis, the bifunctional diterpene synthase bsc8 that possesses both prenyl transferase and terpene cyclase activity, converts isopentenyl diphosphate and dimethylallyl diphosphate into geranylgeranyl diphosphate (GGDP) that is further converted into fusicocca-2,10(14)-diene, the first precursor for brassicicene C. Fusicocca-2,10(14)-diene is then substrate of cytochrome P450 monooxygenase bsc1 for hydroxylation at the C-8 position. Oxidation at C-16 position to aldehyde is then catalyzed by the cytochrome P450 monooyxygenase bsc7, yielding fusicocca-2,10(14)-diene-8-beta,16-diol. Follows the isomerization of the double bond and reduction of aldehyde to alcohol catalyzed by the short-chain dehydrogenase/reductase bsc3 to yield the diol compound fusicocca-1,10(14)-diene-8 beta,16-diol. The next step is the oxidation at the C-3 position of fusicocca-2,10(14)-diene-8-beta,16-diol catalyzed by the alpha-ketoglutarate dependent dioxygenase bsc9, to produce a triol compound. Methylation of the hydroxy group at position 16 is performed by the methyltransferase bsc6. 16-O-methylation is followed by oxidation at the C-13 position to ketone and an alkyl shift of the methyl group leads to brassicicene C. Although the probable acetyltransferase bsc4 is included in the gene cluster, no acetylation reactions are necessary for brassicicene C biosynthesis. However, the fact that brassicicene E, which is a structurally related compound having an acetoxy group at position 12, was previously isolated from another strain of A.brassicicola suggests that the ATCC 96836 strain might also produce a small amount of brassicicene E. The chain is Cytochrome P450 monooxygenase bsc5 from Alternaria brassicicola (Dark leaf spot agent).